The following is a 205-amino-acid chain: Small ribosomal subunit protein uS4 (205 aa).

One can recognise an S4 RNA-binding domain in the interval 95–158; that stretch reads SRLDNIVYRM…TKSPLVKNFI (64 aa).

It belongs to the universal ribosomal protein uS4 family. In terms of assembly, part of the 30S ribosomal subunit. Contacts protein S5. The interaction surface between S4 and S5 is involved in control of translational fidelity.

In terms of biological role, one of the primary rRNA binding proteins, it binds directly to 16S rRNA where it nucleates assembly of the body of the 30S subunit. Functionally, with S5 and S12 plays an important role in translational accuracy. The polypeptide is Small ribosomal subunit protein uS4 (Mycoplasma genitalium (strain ATCC 33530 / DSM 19775 / NCTC 10195 / G37) (Mycoplasmoides genitalium)).